The following is a 220-amino-acid chain: N-(5'-phosphoribosyl)anthranilate isomerase (220 aa).

It belongs to the TrpF family.

The catalysed reaction is N-(5-phospho-beta-D-ribosyl)anthranilate = 1-(2-carboxyphenylamino)-1-deoxy-D-ribulose 5-phosphate. It functions in the pathway amino-acid biosynthesis; L-tryptophan biosynthesis; L-tryptophan from chorismate: step 3/5. The protein is N-(5'-phosphoribosyl)anthranilate isomerase of Gloeothece citriformis (strain PCC 7424) (Cyanothece sp. (strain PCC 7424)).